The primary structure comprises 718 residues: Polyribonucleotide nucleotidyltransferase (718 aa).

Asp497 and Asp503 together coordinate Mg(2+). A KH domain is found at 564 to 623; it reads PRLLTLKIEPEHIGMVIGPGGKTIKGITEQTSCKIDIADDGTVTIASSEGERAERARQMI. The 69-residue stretch at 633 to 701 folds into the S1 motif domain; sequence GEVYLGRVTR…SKGRLNLTRL (69 aa).

The protein belongs to the polyribonucleotide nucleotidyltransferase family. In terms of assembly, interacts with RNase E (rne). Mg(2+) is required as a cofactor.

The protein resides in the cytoplasm. The catalysed reaction is RNA(n+1) + phosphate = RNA(n) + a ribonucleoside 5'-diphosphate. In terms of biological role, involved in mRNA degradation. Catalyzes the phosphorolysis of single-stranded polyribonucleotides processively in the 3'- to 5'-direction. This is Polyribonucleotide nucleotidyltransferase from Synechocystis sp. (strain ATCC 27184 / PCC 6803 / Kazusa).